A 408-amino-acid chain; its full sequence is MKVLVINAGSSSLKYQLIDMINESPLAVGLCERVGIDNSIITQKRFDGKKLEKQVDLPTHRVALEEVVKALTDPEFGVITDMGEINAVGHRVVHGGEKFTTSALFDAGVEEAIRDCFDLAPLHNPPNMMGISACAEIMPGTPMVIVFDTAFHQTMPAYAYMYALPYDLYEKYGVRKYGFHGTSHKYVAGRAALMLGKPIEDTKIITCHLGNGSSIAAVKGGKSIDTSMGFTPLEGVAMGTRCGSIDPAVVPFVMDKESLSSREVDTLMNKKSGVLGVSGISNDFRDLDEAASHGNERAELALEIFAYSVKRVIGEYLAVLNGADAIVFTAGIGENSASIRKRILTGLEGLGIKIDEEKNKIRGQEIDISTPDSSIRVFVIPTNEELAIARETKEIVETEAKLRKSVPV.

Position 7 (Asn7) interacts with Mg(2+). An ATP-binding site is contributed by Lys14. Arg91 contacts substrate. Asp148 acts as the Proton donor/acceptor in catalysis. ATP is bound by residues 208–212, 283–285, and 331–335; these read HLGNG, DFR, and GIGEN. A Mg(2+)-binding site is contributed by Glu384.

It belongs to the acetokinase family. As to quaternary structure, homodimer. Requires Mg(2+) as cofactor. Mn(2+) serves as cofactor.

Its subcellular location is the cytoplasm. It carries out the reaction acetate + ATP = acetyl phosphate + ADP. The protein operates within metabolic intermediate biosynthesis; acetyl-CoA biosynthesis; acetyl-CoA from acetate: step 1/2. Catalyzes the formation of acetyl phosphate from acetate and ATP. Can also catalyze the reverse reaction. The polypeptide is Acetate kinase (Methanosarcina barkeri (strain Fusaro / DSM 804)).